Consider the following 610-residue polypeptide: T-cell immunomodulatory protein (610 aa).

The N-terminal stretch at 1–32 is a signal peptide; sequence MAAGRLPSARAVLAPLFLGLALLSVGPAPARA. Asn35, Asn123, Asn138, Asn145, Asn150, Asn175, and Asn241 each carry an N-linked (GlcNAc...) asparagine glycan. One copy of the FG-GAP 1; atypical repeat lies at 98–135; it reads LVTSVVPGDYDGDSQMDVLLTYFPQNHTNSELGAVIFW. One copy of the FG-GAP 2; atypical repeat lies at 153-183; the sequence is FHDQPLIMDFNGDLIPDVFGITNESSQPQIL. One copy of the FG-GAP 3; atypical repeat lies at 256-291; that stretch reads VVGQSAFADFDGDGHMDHLLPGCEDKDCQKSAIYLM. N-linked (GlcNAc...) asparagine glycans are attached at residues Asn351, Asn369, and Asn480. A helical transmembrane segment spans residues 565–585; sequence VLLTAVALIGVCIFILAIIAI.

Belongs to the TIP family. As to quaternary structure, interacts with RUVBL1, RUVBL2 and alpha-tubulin.

It localises to the secreted. The protein localises to the membrane. Modulator of T-cell function. Has a protective effect in graft versus host disease model. In Mus musculus (Mouse), this protein is T-cell immunomodulatory protein.